We begin with the raw amino-acid sequence, 476 residues long: Aspartyl/glutamyl-tRNA(Asn/Gln) amidotransferase subunit B (476 aa).

It belongs to the GatB/GatE family. GatB subfamily. In terms of assembly, heterotrimer of A, B and C subunits.

The catalysed reaction is L-glutamyl-tRNA(Gln) + L-glutamine + ATP + H2O = L-glutaminyl-tRNA(Gln) + L-glutamate + ADP + phosphate + H(+). It carries out the reaction L-aspartyl-tRNA(Asn) + L-glutamine + ATP + H2O = L-asparaginyl-tRNA(Asn) + L-glutamate + ADP + phosphate + 2 H(+). Its function is as follows. Allows the formation of correctly charged Asn-tRNA(Asn) or Gln-tRNA(Gln) through the transamidation of misacylated Asp-tRNA(Asn) or Glu-tRNA(Gln) in organisms which lack either or both of asparaginyl-tRNA or glutaminyl-tRNA synthetases. The reaction takes place in the presence of glutamine and ATP through an activated phospho-Asp-tRNA(Asn) or phospho-Glu-tRNA(Gln). In Neisseria meningitidis serogroup A / serotype 4A (strain DSM 15465 / Z2491), this protein is Aspartyl/glutamyl-tRNA(Asn/Gln) amidotransferase subunit B.